A 91-amino-acid polypeptide reads, in one-letter code: Cell division topological specificity factor (91 aa).

It belongs to the MinE family.

Prevents the cell division inhibition by proteins MinC and MinD at internal division sites while permitting inhibition at polar sites. This ensures cell division at the proper site by restricting the formation of a division septum at the midpoint of the long axis of the cell. The sequence is that of Cell division topological specificity factor from Bradyrhizobium sp. (strain BTAi1 / ATCC BAA-1182).